A 425-amino-acid polypeptide reads, in one-letter code: Enolase (425 aa).

A (2R)-2-phosphoglycerate-binding site is contributed by glutamine 163. The Proton donor role is filled by glutamate 205. Residues aspartate 242, glutamate 285, and aspartate 312 each contribute to the Mg(2+) site. (2R)-2-phosphoglycerate is bound by residues lysine 337, arginine 366, serine 367, and lysine 388. Lysine 337 serves as the catalytic Proton acceptor.

Belongs to the enolase family. Mg(2+) serves as cofactor.

It is found in the cytoplasm. The protein resides in the secreted. Its subcellular location is the cell surface. It carries out the reaction (2R)-2-phosphoglycerate = phosphoenolpyruvate + H2O. Its pathway is carbohydrate degradation; glycolysis; pyruvate from D-glyceraldehyde 3-phosphate: step 4/5. Functionally, catalyzes the reversible conversion of 2-phosphoglycerate (2-PG) into phosphoenolpyruvate (PEP). It is essential for the degradation of carbohydrates via glycolysis. The polypeptide is Enolase (Granulibacter bethesdensis (strain ATCC BAA-1260 / CGDNIH1)).